We begin with the raw amino-acid sequence, 381 residues long: Chaperone protein DnaJ (381 aa).

The region spanning 5–70 (DYYEVLGVSR…DKKAAYDRYG (66 aa)) is the J domain. The CR-type zinc-finger motif lies at 140–218 (GVQKTINVPA…CHGAGRVEKE (79 aa)). Zn(2+) is bound by residues cysteine 153, cysteine 156, cysteine 170, cysteine 173, cysteine 192, cysteine 195, cysteine 206, and cysteine 209. CXXCXGXG motif repeat units follow at residues 153-160 (CDACKGTG), 170-177 (CPTCSGMG), 192-199 (CPTCNGMG), and 206-213 (CKVCHGAG).

It belongs to the DnaJ family. In terms of assembly, homodimer. It depends on Zn(2+) as a cofactor.

It is found in the cytoplasm. Functionally, participates actively in the response to hyperosmotic and heat shock by preventing the aggregation of stress-denatured proteins and by disaggregating proteins, also in an autonomous, DnaK-independent fashion. Unfolded proteins bind initially to DnaJ; upon interaction with the DnaJ-bound protein, DnaK hydrolyzes its bound ATP, resulting in the formation of a stable complex. GrpE releases ADP from DnaK; ATP binding to DnaK triggers the release of the substrate protein, thus completing the reaction cycle. Several rounds of ATP-dependent interactions between DnaJ, DnaK and GrpE are required for fully efficient folding. Also involved, together with DnaK and GrpE, in the DNA replication of plasmids through activation of initiation proteins. The chain is Chaperone protein DnaJ from Cereibacter sphaeroides (strain KD131 / KCTC 12085) (Rhodobacter sphaeroides).